Here is a 274-residue protein sequence, read N- to C-terminus: Thiamine kinase (274 aa).

The protein belongs to the thiamine kinase family.

It carries out the reaction thiamine + ATP = thiamine phosphate + ADP + H(+). It participates in cofactor biosynthesis; thiamine diphosphate biosynthesis; thiamine phosphate from thiamine: step 1/1. Functionally, catalyzes the ATP-dependent phosphorylation of thiamine to thiamine phosphate. Is involved in thiamine salvage. The polypeptide is Thiamine kinase (Escherichia coli (strain K12 / MC4100 / BW2952)).